The chain runs to 255 residues: Cytochrome c oxidase subunit 2 (255 aa).

An N-terminal signal peptide occupies residues 1-16; the sequence is MFNLFPPFGANTAIFN. The Mitochondrial intermembrane portion of the chain corresponds to 17-43; sequence DAPQPWQVGFQDGASPTQEGITELHDS. The helical transmembrane segment at 44 to 64 threads the bilayer; sequence IFFYLVIICFGVLWVLSSVIV. At 65–80 the chain is on the mitochondrial matrix side; that stretch reads NFNSNKSQLVYKYANH. Residues 81–101 traverse the membrane as a helical segment; it reads GTLIELIWTITPALVLIAIAF. The Mitochondrial intermembrane segment spans residues 102 to 255; that stretch reads PSFKLLYLMD…KYLAWIDSQA (154 aa). Histidine 189, cysteine 224, glutamate 226, cysteine 228, histidine 232, and methionine 235 together coordinate Cu cation. Glutamate 226 contributes to the Mg(2+) binding site.

Belongs to the cytochrome c oxidase subunit 2 family. In terms of assembly, component of the cytochrome c oxidase (complex IV, CIV), a multisubunit enzyme composed of a catalytic core of 3 subunits and several supernumerary subunits. The complex exists as a monomer or a dimer and forms supercomplexes (SCs) in the inner mitochondrial membrane with ubiquinol-cytochrome c oxidoreductase (cytochrome b-c1 complex, complex III, CIII). Cu cation is required as a cofactor.

The protein resides in the mitochondrion inner membrane. The enzyme catalyses 4 Fe(II)-[cytochrome c] + O2 + 8 H(+)(in) = 4 Fe(III)-[cytochrome c] + 2 H2O + 4 H(+)(out). Component of the cytochrome c oxidase, the last enzyme in the mitochondrial electron transport chain which drives oxidative phosphorylation. The respiratory chain contains 3 multisubunit complexes succinate dehydrogenase (complex II, CII), ubiquinol-cytochrome c oxidoreductase (cytochrome b-c1 complex, complex III, CIII) and cytochrome c oxidase (complex IV, CIV), that cooperate to transfer electrons derived from NADH and succinate to molecular oxygen, creating an electrochemical gradient over the inner membrane that drives transmembrane transport and the ATP synthase. Cytochrome c oxidase is the component of the respiratory chain that catalyzes the reduction of oxygen to water. Electrons originating from reduced cytochrome c in the intermembrane space (IMS) are transferred via the dinuclear copper A center (CU(A)) of subunit 2 and heme A of subunit 1 to the active site in subunit 1, a binuclear center (BNC) formed by heme A3 and copper B (CU(B)). The BNC reduces molecular oxygen to 2 water molecules using 4 electrons from cytochrome c in the IMS and 4 protons from the mitochondrial matrix. In Mycosarcoma maydis (Corn smut fungus), this protein is Cytochrome c oxidase subunit 2 (COX2).